Here is a 528-residue protein sequence, read N- to C-terminus: MDTRVDTDNAMPARFSAQIQNEDEVTSDQGNNGGPNGGGRLAPRPVFRPPVDPASRQAFGRPSGVQGSFVAERVRPQKYQDQSDFTPNDQLADPVLQEAFGRPFAGAESLQRHPIDAGALAAEKDGAGPDEPDDPWRDPAAAAALGTPALAAPAPHGALAGSGKLGVRDVLFGGKVSYLALGILVAIALVIGGIGGVIGRKTAEVVDAFTTSKVTLSTTGNAQEPAGRFTKVAAAVADSVVTIESVSDQEGMQGSGVIVDGRGYIVTNNHVISEAANNPSQFKTTVVFNDGKEVPANLVGRDPKTDLAVLKVDNVDNLTVARLGDSSKVRVGDEVLAVGAPLGLRSTVTQGIVSALHRPVPLSGEGSDTDTVIDAIQTDASINHGNSGGPLIDMDAQVIGINTAGKSLSDSASGLGFAIPVNEMKLVANSLIKDGKIVHPTLGISTRSVSNAIASGAQVANVKAGSPAQKGGILENDVIVKVGNRAVADSDEFVVAVRQLAIGQDAPIEVVREGRHVTLTVKPDPDST.

Residues 1-70 (MDTRVDTDNA…RPSGVQGSFV (70 aa)) are disordered. The Cytoplasmic portion of the chain corresponds to 1 to 178 (MDTRVDTDNA…DVLFGGKVSY (178 aa)). Positions 31-40 (NNGGPNGGGR) are enriched in gly residues. A helical membrane pass occupies residues 179 to 199 (LALGILVAIALVIGGIGGVIG). Residues 200–528 (RKTAEVVDAF…LTVKPDPDST (329 aa)) are Periplasmic-facing. Catalysis depends on charge relay system residues His270, Asp306, and Ser387. The region spanning 426–487 (LVANSLIKDG…VIVKVGNRAV (62 aa)) is the PDZ domain.

Belongs to the peptidase S1C family. In terms of assembly, the C-terminal region exhibits both monomeric and trimeric forms in solution.

It localises to the cell inner membrane. The catalysed reaction is Acts on substrates that are at least partially unfolded. The cleavage site P1 residue is normally between a pair of hydrophobic residues, such as Val-|-Val.. Functionally, essential protein that may act as a regulatory protease that is conditionally activated upon appropriate environmental triggers. The protein is Probable serine protease HtrA1 of Mycobacterium tuberculosis (strain ATCC 25618 / H37Rv).